The sequence spans 331 residues: ADP-L-glycero-D-manno-heptose-6-epimerase (331 aa).

NADP(+) contacts are provided by residues Phe-11–Ile-12, Asp-32–Asn-33, Lys-39, Lys-54, Glu-75–Ser-79, and Asn-92. Residue Tyr-139 is the Proton acceptor of the active site. Lys-143 contacts NADP(+). Asn-168 is a substrate binding site. NADP(+) contacts are provided by Val-169 and Lys-177. Lys-177 (proton acceptor) is an active-site residue. Substrate contacts are provided by residues Arg-179, His-186, Phe-200–Tyr-203, Arg-213, and Tyr-292.

It belongs to the NAD(P)-dependent epimerase/dehydratase family. HldD subfamily. As to quaternary structure, homopentamer. It depends on NADP(+) as a cofactor.

The catalysed reaction is ADP-D-glycero-beta-D-manno-heptose = ADP-L-glycero-beta-D-manno-heptose. It functions in the pathway nucleotide-sugar biosynthesis; ADP-L-glycero-beta-D-manno-heptose biosynthesis; ADP-L-glycero-beta-D-manno-heptose from D-glycero-beta-D-manno-heptose 7-phosphate: step 4/4. In terms of biological role, catalyzes the interconversion between ADP-D-glycero-beta-D-manno-heptose and ADP-L-glycero-beta-D-manno-heptose via an epimerization at carbon 6 of the heptose. In Ralstonia pickettii (strain 12J), this protein is ADP-L-glycero-D-manno-heptose-6-epimerase.